The sequence spans 403 residues: Serine/threonine transporter SstT (403 aa).

The next 8 membrane-spanning stretches (helical) occupy residues 11 to 31 (GNLVIRIAIGLVLGVLLAFIS), 51 to 71 (AIAPILVFVLVLSAIANKEVG), 81 to 101 (VMYVLGTFLAALTAVVFSFIF), 138 to 158 (ALANANFIGILAWAIGLGIPL), 175 to 195 (AVSYVVKMVISVAPIGVFGLV), 213 to 233 (LLGVLLGAMMTVIFVLDPILV), 285 to 305 (VAIPLGATINMAGAAITVTVL), and 319 to 339 (FMTALLLSIVASICACGASGV).

It belongs to the dicarboxylate/amino acid:cation symporter (DAACS) (TC 2.A.23) family.

Its subcellular location is the cell inner membrane. The catalysed reaction is L-serine(in) + Na(+)(in) = L-serine(out) + Na(+)(out). The enzyme catalyses L-threonine(in) + Na(+)(in) = L-threonine(out) + Na(+)(out). Involved in the import of serine and threonine into the cell, with the concomitant import of sodium (symport system). The polypeptide is Serine/threonine transporter SstT (Haemophilus ducreyi (strain 35000HP / ATCC 700724)).